The sequence spans 259 residues: Pyrroloquinoline-quinone synthase (259 aa).

The protein belongs to the PqqC family.

The catalysed reaction is 6-(2-amino-2-carboxyethyl)-7,8-dioxo-1,2,3,4,7,8-hexahydroquinoline-2,4-dicarboxylate + 3 O2 = pyrroloquinoline quinone + 2 H2O2 + 2 H2O + H(+). Its pathway is cofactor biosynthesis; pyrroloquinoline quinone biosynthesis. In terms of biological role, ring cyclization and eight-electron oxidation of 3a-(2-amino-2-carboxyethyl)-4,5-dioxo-4,5,6,7,8,9-hexahydroquinoline-7,9-dicarboxylic-acid to PQQ. The sequence is that of Pyrroloquinoline-quinone synthase from Bradyrhizobium sp. (strain ORS 278).